Reading from the N-terminus, the 265-residue chain is RING finger protein 208 (265 aa).

The disordered stretch occupies residues 83 to 106 (MPTLEGASHTPPLPRRPRKGSSEL). Ser-103 bears the Phosphoserine mark. Residues 147–194 (CPTCGHTYNVTQRRPRVLSCLHSVCEQCLQILYESCPKYKFISCPTCH) form an RING-type zinc finger.

This chain is RING finger protein 208 (Rnf208), found in Mus musculus (Mouse).